The chain runs to 199 residues: MTQKLDTLQAAIERVIGDRIVHLVRDRGELTLTVKATDYAAIGKTLRDHPDLGFEQLIDICGVDYSGYKDGGYEGLRYAAVSHLLSVQHNWRLRLKVFAPDDDFPLVASLTPIWSGANWFEREAFDMYGIVFDGHTDLRRILTDYGFIGHPMRKDFPVTGHVEMRYDPEQKRVIYQPVSIEPREITPRIIREDNYGGLH.

Belongs to the complex I 30 kDa subunit family. As to quaternary structure, NDH-1 is composed of 14 different subunits. Subunits NuoB, C, D, E, F, and G constitute the peripheral sector of the complex.

The protein resides in the cell inner membrane. The catalysed reaction is a quinone + NADH + 5 H(+)(in) = a quinol + NAD(+) + 4 H(+)(out). NDH-1 shuttles electrons from NADH, via FMN and iron-sulfur (Fe-S) centers, to quinones in the respiratory chain. The immediate electron acceptor for the enzyme in this species is believed to be ubiquinone. Couples the redox reaction to proton translocation (for every two electrons transferred, four hydrogen ions are translocated across the cytoplasmic membrane), and thus conserves the redox energy in a proton gradient. This Leptothrix cholodnii (strain ATCC 51168 / LMG 8142 / SP-6) (Leptothrix discophora (strain SP-6)) protein is NADH-quinone oxidoreductase subunit C.